The primary structure comprises 267 residues: Probable proteasome subunit beta type-2 (267 aa).

Residues 1–35 (MMGINERKGFDFEYYQRNLLLQEKGFPTPKATSTG) constitute a propeptide, removed in mature form. T36 functions as the Nucleophile in the catalytic mechanism.

This sequence belongs to the peptidase T1B family. In terms of assembly, the 26S proteasome consists of a 20S proteasome core and two 19S regulatory subunits. The 20S proteasome core is composed of 28 subunits that are arranged in four stacked rings, resulting in a barrel-shaped structure. The two end rings are each formed by seven alpha subunits, and the two central rings are each formed by seven beta subunits. The catalytic chamber with the active sites is on the inside of the barrel.

It localises to the cytoplasm. The protein localises to the nucleus. It catalyses the reaction Cleavage of peptide bonds with very broad specificity.. Its function is as follows. The proteasome is a multicatalytic proteinase complex which is characterized by its ability to cleave peptides with Arg, Phe, Tyr, Leu, and Glu adjacent to the leaving group at neutral or slightly basic pH. The proteasome has an ATP-dependent proteolytic activity (Potential). The sequence is that of Probable proteasome subunit beta type-2 (pup1) from Schizosaccharomyces pombe (strain 972 / ATCC 24843) (Fission yeast).